The primary structure comprises 414 residues: Tyrosine--tRNA ligase (414 aa).

L-tyrosine is bound at residue Tyr38. The short motif at 43 to 52 (PTATSLHLGN) is the 'HIGH' region element. 2 residues coordinate L-tyrosine: Tyr165 and Gln169. Positions 228–232 (KFGKS) match the 'KMSKS' region motif. Lys231 contributes to the ATP binding site. An S4 RNA-binding domain is found at 349–414 (FNANQIIDLG…KKYFFMIELI (66 aa)).

Belongs to the class-I aminoacyl-tRNA synthetase family. TyrS type 1 subfamily. In terms of assembly, homodimer.

It is found in the cytoplasm. The enzyme catalyses tRNA(Tyr) + L-tyrosine + ATP = L-tyrosyl-tRNA(Tyr) + AMP + diphosphate + H(+). In terms of biological role, catalyzes the attachment of tyrosine to tRNA(Tyr) in a two-step reaction: tyrosine is first activated by ATP to form Tyr-AMP and then transferred to the acceptor end of tRNA(Tyr). The protein is Tyrosine--tRNA ligase of Mesomycoplasma hyopneumoniae (strain 7448) (Mycoplasma hyopneumoniae).